The chain runs to 126 residues: UPF0332 protein glr0978 (126 aa).

Belongs to the UPF0332 family.

The protein is UPF0332 protein glr0978 of Gloeobacter violaceus (strain ATCC 29082 / PCC 7421).